Reading from the N-terminus, the 370-residue chain is uncharacterized protein (370 aa).

Residues Ala62–Gly293 enclose the OBG-type G domain. GTP-binding positions include Gly68–Ser75, Asp114–Leu118, and Asn243–Asp246. The TGS domain occupies Gly293–Ala368.

Belongs to the TRAFAC class OBG-HflX-like GTPase superfamily. OBG GTPase family.

This is an uncharacterized protein from Halobacterium salinarum (strain ATCC 700922 / JCM 11081 / NRC-1) (Halobacterium halobium).